Here is a 407-residue protein sequence, read N- to C-terminus: Dephospho-CoA kinase (407 aa).

Residues 3–201 (RIGLTGGIGA…ERIVPFAHNL (199 aa)) form the DPCK domain. Position 11-16 (11-16 (GAGKSA)) interacts with ATP. The interval 196 to 407 (PFAHNLSTRQ…DWADSTGWKP (212 aa)) is UPF0157.

In the N-terminal section; belongs to the CoaE family. The protein in the C-terminal section; belongs to the UPF0157 (GrpB) family.

The protein localises to the cytoplasm. The enzyme catalyses 3'-dephospho-CoA + ATP = ADP + CoA + H(+). It functions in the pathway cofactor biosynthesis; coenzyme A biosynthesis; CoA from (R)-pantothenate: step 5/5. In terms of biological role, catalyzes the phosphorylation of the 3'-hydroxyl group of dephosphocoenzyme A to form coenzyme A. The polypeptide is Dephospho-CoA kinase (Mycolicibacterium paratuberculosis (strain ATCC BAA-968 / K-10) (Mycobacterium paratuberculosis)).